Reading from the N-terminus, the 201-residue chain is NAD(P)H-dependent FMN reductase ntnL (201 aa).

FMN is bound by residues arginine 12, 90–93 (EYNG), and tyrosine 120.

As to quaternary structure, homodimer.

The enzyme catalyses FMNH2 + NADP(+) = FMN + NADPH + 2 H(+). The catalysed reaction is FMNH2 + NAD(+) = FMN + NADH + 2 H(+). The protein operates within secondary metabolite biosynthesis; terpenoid biosynthesis. Its function is as follows. NAD(P)H-dependent FMN reductase; part of the gene cluster that mediates the biosynthesis of the meroterpenoids nectripenoids A and B, as well as cochliquninone D and isocochliquninone E. The pathway probably begins with the HR-PKS ntnH that catalyzes two chain-extension steps to form a reduced triketide, which then primes the SAT domain in the NR-PKS ntnG to initiate three more cycles of extension to give a linear hexaketide corresponding to the polyketide part of nectripenoids. The FAD-dependent monooxygenase ntnJ then performs an oxidative decarboxylation at C11 of the ntnH/ntnG product, via an electrophilic aromatic hydroxylation with concomitant ipso-decarboxylation. The membrane-bound polyprenyl transferase ntnF then introduces a farnesyl group before the FAD-dependent monooxygenase ntnK functions as the first epoxidase on terminal C12'-C13' olefin, followed by a second epoxidation on C7'-C8' catalyzed by ntnA. The terpene cyclase/mutase ntnI then initiates the sequential tricyclic ring formation through protonation of the terminal epoxide and catalyzes the regioselective and stereoselective 6/6/6-tricyclic ring formation. The cytochrome P450 monooxygenase ntnM may then hydroxylate C1'. The sequence is that of NAD(P)H-dependent FMN reductase ntnL from Nectria sp.